Consider the following 85-residue polypeptide: U4-theraphotoxin-Hhn1s (85 aa).

Positions 1–22 (MKVTLIAILTCAAVLVLHTTAA) are cleaved as a signal peptide. Residues 23–48 (EELEAESQLMEVGMPDTELAAVDEER) constitute a propeptide that is removed on maturation. 3 disulfide bridges follow: Cys-52/Cys-66, Cys-56/Cys-77, and Cys-71/Cys-82.

This sequence belongs to the neurotoxin 12 (Hwtx-2) family. 02 (Hwtx-2) subfamily. In terms of tissue distribution, expressed by the venom gland.

Its subcellular location is the secreted. Functionally, postsynaptic neurotoxin. This Cyriopagopus hainanus (Chinese bird spider) protein is U4-theraphotoxin-Hhn1s.